The following is a 162-amino-acid chain: MTAIQQFFKTFFLTELLKGLALTGRYTFKRKFTVQFPEEKTPISPRFRGLHALRRYENGEERCIACKLCEAVCPALAITIESETRADNTRRTTRYDIDLTKCIFCGFCEESCPVDSIVETQILEYHGEKRGDLYFTKDMLLAVGDRYEKEVAAAKAADARYR.

4Fe-4S ferredoxin-type domains lie at 54–83 and 93–122; these read RRYENGEERCIACKLCEAVCPALAITIESE and TRYDIDLTKCIFCGFCEESCPVDSIVETQI. 8 residues coordinate [4Fe-4S] cluster: cysteine 63, cysteine 66, cysteine 69, cysteine 73, cysteine 102, cysteine 105, cysteine 108, and cysteine 112.

It belongs to the complex I 23 kDa subunit family. In terms of assembly, NDH-1 is composed of 14 different subunits. Subunits NuoA, H, J, K, L, M, N constitute the membrane sector of the complex. The cofactor is [4Fe-4S] cluster.

The protein localises to the cell inner membrane. The catalysed reaction is a quinone + NADH + 5 H(+)(in) = a quinol + NAD(+) + 4 H(+)(out). Its function is as follows. NDH-1 shuttles electrons from NADH, via FMN and iron-sulfur (Fe-S) centers, to quinones in the respiratory chain. The immediate electron acceptor for the enzyme in this species is believed to be ubiquinone. Couples the redox reaction to proton translocation (for every two electrons transferred, four hydrogen ions are translocated across the cytoplasmic membrane), and thus conserves the redox energy in a proton gradient. This chain is NADH-quinone oxidoreductase subunit I, found in Burkholderia pseudomallei (strain 668).